Reading from the N-terminus, the 143-residue chain is Small ribosomal subunit protein bS6 (143 aa).

Positions 98-143 (TEQSLIMKSKDEKGDKPERSERRRRDDEEGEAPAANDNDGDNAEAA) are disordered. Positions 105 to 124 (KSKDEKGDKPERSERRRRDD) are enriched in basic and acidic residues.

Belongs to the bacterial ribosomal protein bS6 family.

Functionally, binds together with bS18 to 16S ribosomal RNA. The polypeptide is Small ribosomal subunit protein bS6 (Xanthomonas euvesicatoria pv. vesicatoria (strain 85-10) (Xanthomonas campestris pv. vesicatoria)).